Consider the following 461-residue polypeptide: Cysteine--tRNA ligase (461 aa).

Residue C28 participates in Zn(2+) binding. The 'HIGH' region motif lies at 30 to 40 (VTIYDLCHIGH). Zn(2+) is bound by residues C209, H234, and E238. Positions 266–270 (KMSKS) match the 'KMSKS' region motif. Position 269 (K269) interacts with ATP.

This sequence belongs to the class-I aminoacyl-tRNA synthetase family. Monomer. Zn(2+) serves as cofactor.

It is found in the cytoplasm. It catalyses the reaction tRNA(Cys) + L-cysteine + ATP = L-cysteinyl-tRNA(Cys) + AMP + diphosphate. The protein is Cysteine--tRNA ligase of Edwardsiella ictaluri (strain 93-146).